A 303-amino-acid polypeptide reads, in one-letter code: Probable 5-dehydro-4-deoxyglucarate dehydratase (303 aa).

This sequence belongs to the DapA family.

The enzyme catalyses 5-dehydro-4-deoxy-D-glucarate + H(+) = 2,5-dioxopentanoate + CO2 + H2O. It functions in the pathway carbohydrate acid metabolism; D-glucarate degradation; 2,5-dioxopentanoate from D-glucarate: step 2/2. This chain is Probable 5-dehydro-4-deoxyglucarate dehydratase, found in Variovorax paradoxus (strain S110).